Reading from the N-terminus, the 218-residue chain is Ras-related protein Rab-42 (218 aa).

Alanine 19, glycine 21, lysine 22, threonine 23, and threonine 46 together coordinate GTP. 3 residues coordinate Mg(2+): threonine 23, threonine 46, and aspartate 70. Positions 73, 130, 132, 160, and 161 each coordinate GTP. Residues cysteine 216 and cysteine 218 are each lipidated (S-geranylgeranyl cysteine).

Belongs to the small GTPase superfamily. Rab family. Requires Mg(2+) as cofactor.

It is found in the membrane. It catalyses the reaction GTP + H2O = GDP + phosphate + H(+). With respect to regulation, regulated by guanine nucleotide exchange factors (GEFs) which promote the exchange of bound GDP for free GTP. Regulated by GTPase activating proteins (GAPs) which increase the GTP hydrolysis activity. Inhibited by GDP dissociation inhibitors (GDIs). Functionally, the small GTPases Rab are key regulators of intracellular membrane trafficking, from the formation of transport vesicles to their fusion with membranes. Rabs cycle between an inactive GDP-bound form and an active GTP-bound form that is able to recruit to membranes different sets of downstream effectors directly responsible for vesicle formation, movement, tethering and fusion. The physiological function of RAB42 remains undefined. The sequence is that of Ras-related protein Rab-42 from Homo sapiens (Human).